A 200-amino-acid chain; its full sequence is LIM domain-containing protein WLIM2a (200 aa).

2 LIM zinc-binding domains span residues 8–68 (QKCR…LFKE) and 107–167 (DKCA…LFKE).

In terms of assembly, interacts with F-actin. Expressed in roots, leaves, stems, flowers and siliques. Barely detected in pollen.

It is found in the cytoplasm. The protein localises to the cytoskeleton. Functionally, binds to actin filaments and promotes cross-linking into thick bundles. Has an actin-stabilizing activity. The actin regulatory activities are not regulated by pH and [Ca(2+)]. This chain is LIM domain-containing protein WLIM2a, found in Arabidopsis thaliana (Mouse-ear cress).